Here is a 399-residue protein sequence, read N- to C-terminus: MPVDDFSLSANSISGESTLVYQDVARQVQKTKGIRIINFGIGQPDLPTFARIREAAKKSLDEGFTGYTSAYGIDELRQKIAEHLSSKYESVRKEEVIVTPGAKTALYLAFLLYINPGDEVIIFDPSFYSYAEVVKMLGGVPVYVKMKFNESTGFSLNLSELESKINKKTKMIVLNNPHNPTGMVFDPIEIEKLMEITKEKKVLLLSDEIYDYFIYEGKMKSVLEDPDWRDYVIYVNGFSKTFSMTGWRLGYVVAKEKVIKKMAEIAANIYTCPTSFAQKGALAAFESFDEVKEMISLFKKRRDIMYEELKKIKGIQVHKSQGAFYMFPFIGEILKKANLSVKDFSLKLIEEKGVTTIPGEVFPLEVGKDFVRLSFAVKEDDIREGIKRMKEFIDMLMTP.

Residues Gly-42 and Asn-179 each contribute to the L-aspartate site. Position 240 is an N6-(pyridoxal phosphate)lysine (Lys-240). Residue Arg-372 coordinates L-aspartate.

It belongs to the class-I pyridoxal-phosphate-dependent aminotransferase family. In terms of assembly, homodimer. Pyridoxal 5'-phosphate is required as a cofactor.

It is found in the cytoplasm. The enzyme catalyses L-aspartate + 2-oxoglutarate = oxaloacetate + L-glutamate. In Sulfurisphaera tokodaii (strain DSM 16993 / JCM 10545 / NBRC 100140 / 7) (Sulfolobus tokodaii), this protein is Aspartate aminotransferase (aspC).